Reading from the N-terminus, the 337-residue chain is MAVEMFYDDDADLSIIQGRKVAVIGYGSQGHAHSLSLRDSGVDVRIGLKEGSKSRAKAEEQGLTVGTPAEVSEWADVIMVLAPDTAQASIFTNDIEPNLKDGDALFFGHGLNIHFDLIKAPEFVTVGMVAPKGPGHLVRRQFVDGKGVPALIAIDQDPKGEGQALALSYAKGIGGTRAGVIKTTFKEETETDLFGEQAVLCGGTEELVKTGFEVMVEAGYAPEMAYFEVLHELKLIVDLMYEGGIARMNYSVSDTAEFGGYLSGPRVIDAGTKERMKAILADIQSGEFTRRLVANVENGNTELEGLRKANAEHPIEVTGKKLRDLMSWVDRPITETA.

Positions 3-183 (VEMFYDDDAD…GGTRAGVIKT (181 aa)) constitute a KARI N-terminal Rossmann domain. NADP(+) contacts are provided by residues 26–29 (YGSQ), K49, S52, S54, and 84–87 (DTAQ). The active site involves H109. G135 contributes to the NADP(+) binding site. The KARI C-terminal knotted domain occupies 184–329 (TFKEETETDL…KKLRDLMSWV (146 aa)). Residues D192, E196, E228, and E232 each coordinate Mg(2+). Position 253 (S253) interacts with substrate.

The protein belongs to the ketol-acid reductoisomerase family. Mg(2+) is required as a cofactor.

The enzyme catalyses (2R)-2,3-dihydroxy-3-methylbutanoate + NADP(+) = (2S)-2-acetolactate + NADPH + H(+). The catalysed reaction is (2R,3R)-2,3-dihydroxy-3-methylpentanoate + NADP(+) = (S)-2-ethyl-2-hydroxy-3-oxobutanoate + NADPH + H(+). It participates in amino-acid biosynthesis; L-isoleucine biosynthesis; L-isoleucine from 2-oxobutanoate: step 2/4. It functions in the pathway amino-acid biosynthesis; L-valine biosynthesis; L-valine from pyruvate: step 2/4. Its function is as follows. Involved in the biosynthesis of branched-chain amino acids (BCAA). Catalyzes an alkyl-migration followed by a ketol-acid reduction of (S)-2-acetolactate (S2AL) to yield (R)-2,3-dihydroxy-isovalerate. In the isomerase reaction, S2AL is rearranged via a Mg-dependent methyl migration to produce 3-hydroxy-3-methyl-2-ketobutyrate (HMKB). In the reductase reaction, this 2-ketoacid undergoes a metal-dependent reduction by NADPH to yield (R)-2,3-dihydroxy-isovalerate. This is Ketol-acid reductoisomerase (NADP(+)) from Rhodococcus jostii (strain RHA1).